The chain runs to 397 residues: Putative nickel insertion protein (397 aa).

It belongs to the LarC family.

The protein is Putative nickel insertion protein of Synechococcus sp. (strain JA-3-3Ab) (Cyanobacteria bacterium Yellowstone A-Prime).